Consider the following 476-residue polypeptide: UDP-N-acetylmuramate--L-alanine ligase (476 aa).

112-118 contacts ATP; the sequence is GTHGKTT.

The protein belongs to the MurCDEF family.

Its subcellular location is the cytoplasm. It catalyses the reaction UDP-N-acetyl-alpha-D-muramate + L-alanine + ATP = UDP-N-acetyl-alpha-D-muramoyl-L-alanine + ADP + phosphate + H(+). It functions in the pathway cell wall biogenesis; peptidoglycan biosynthesis. Functionally, cell wall formation. The chain is UDP-N-acetylmuramate--L-alanine ligase from Magnetococcus marinus (strain ATCC BAA-1437 / JCM 17883 / MC-1).